We begin with the raw amino-acid sequence, 325 residues long: MSEQSKDLSDPNFAAEVPDCEMQDSDAVPVGIPPPASLAANLAGPPCAPEGPMAAQQASPPPEERIEDVDPKILQQAAEEGRAHQPQSPARPIPAPPAPAQLVQKAHELMWYVLVKDQKRMVLWFPDMVKEVMGSYKKWCRSILRRTSVILARVFGLHLRLTNLHTMEFALVKALSPEELDRVALNNRMPMTGLLLMILSLIYVKGRGAREGAVWNVLRILGLRPWKKHSTFGDVRKIITEEFVQQNYLKYQRVPHIEPPEYEFFWGSRANREITKMQIMEFLARVFKKDPQAWPSRYREALEQARALREANLAAQAPRSSVSED.

Disordered stretches follow at residues 1-69 and 77-96; these read MSEQ…IEDV and AAEE…IPAP. The 200-residue stretch at 102 to 301 folds into the MAGE domain; the sequence is LVQKAHELMW…QAWPSRYREA (200 aa).

Binds to the transactivation domains of E2F1 and p53. Binds also SV40 large T antigen and adenovirus E1A. Interacts with nucleobindin 1 and 2. As to expression, brain specific. Not detected in other tissues. Expressed in postmitotic neurons. In adult brain the highest expression is in hypothalamus. Highly expressed in thalamus and midbrain. Relatively low levels are in cerebral cortex, hippocampus, striatum, olfactory bulb, cerebellum, pons and spinal cord. Also detected in neurally differentiated embryonal carcinoma cells.

The protein localises to the cytoplasm. It is found in the nucleus. Its subcellular location is the nucleoplasm. It localises to the nucleus matrix. In terms of biological role, growth suppressor that facilitates the entry of the cell into cell cycle arrest. Functionally similar to the retinoblastoma protein it binds to and represses the activity of cell-cycle-promoting proteins such as SV40 large T antigen, adenovirus E1A, and the transcription factor E2F. Necdin also interacts with p53 and works in an additive manner to inhibit cell growth. Also functions as a transcription factor and directly binds to specific guanosine-rich DNA sequences. This chain is Necdin (Ndn), found in Mus musculus (Mouse).